The chain runs to 241 residues: SURF1-like protein (241 aa).

2 helical membrane passes run 5–25 (LTVL…LNRL) and 199–219 (LEYA…YRIY).

It belongs to the SURF1 family.

It is found in the cell membrane. This is SURF1-like protein from Rickettsia bellii (strain RML369-C).